The sequence spans 106 residues: UPF0145 protein FTL_1249 (106 aa).

This sequence belongs to the UPF0145 family.

The polypeptide is UPF0145 protein FTL_1249 (Francisella tularensis subsp. holarctica (strain LVS)).